Here is a 310-residue protein sequence, read N- to C-terminus: tRNA dimethylallyltransferase (310 aa).

An ATP-binding site is contributed by glycine 10–serine 17. Substrate is bound at residue threonine 12–serine 17. Residues aspartate 35 to glutamine 38 form an interaction with substrate tRNA region.

The protein belongs to the IPP transferase family. Monomer. It depends on Mg(2+) as a cofactor.

The catalysed reaction is adenosine(37) in tRNA + dimethylallyl diphosphate = N(6)-dimethylallyladenosine(37) in tRNA + diphosphate. Its function is as follows. Catalyzes the transfer of a dimethylallyl group onto the adenine at position 37 in tRNAs that read codons beginning with uridine, leading to the formation of N6-(dimethylallyl)adenosine (i(6)A). The polypeptide is tRNA dimethylallyltransferase (Clostridium perfringens (strain SM101 / Type A)).